The primary structure comprises 37 residues: Large ribosomal subunit protein bL36c (37 aa).

The protein belongs to the bacterial ribosomal protein bL36 family.

The protein resides in the plastid. It localises to the cyanelle. The chain is Large ribosomal subunit protein bL36c (rpl36) from Cyanophora paradoxa.